The sequence spans 227 residues: Cytochrome c oxidase subunit 2 (227 aa).

Residues 1 to 14 (MAYPFQLGFQDASS) lie on the Mitochondrial intermembrane side of the membrane. A helical transmembrane segment spans residues 15–45 (PIMEELLHFHDHTLMIVFLISSLVLYIISLM). The Mitochondrial matrix segment spans residues 46–59 (LTTKLTHTSTMDAQ). The helical transmembrane segment at 60-87 (EVETIWTILPAIILILIALPSLRILYMM) threads the bilayer. Over 88 to 227 (DEINNPSLTV…HFENWSLSMI (140 aa)) the chain is Mitochondrial intermembrane. Cu cation-binding residues include H161, C196, E198, C200, H204, and M207. E198 is a Mg(2+) binding site.

The protein belongs to the cytochrome c oxidase subunit 2 family. As to quaternary structure, component of the cytochrome c oxidase (complex IV, CIV), a multisubunit enzyme composed of 14 subunits. The complex is composed of a catalytic core of 3 subunits MT-CO1, MT-CO2 and MT-CO3, encoded in the mitochondrial DNA, and 11 supernumerary subunits COX4I, COX5A, COX5B, COX6A, COX6B, COX6C, COX7A, COX7B, COX7C, COX8 and NDUFA4, which are encoded in the nuclear genome. The complex exists as a monomer or a dimer and forms supercomplexes (SCs) in the inner mitochondrial membrane with NADH-ubiquinone oxidoreductase (complex I, CI) and ubiquinol-cytochrome c oxidoreductase (cytochrome b-c1 complex, complex III, CIII), resulting in different assemblies (supercomplex SCI(1)III(2)IV(1) and megacomplex MCI(2)III(2)IV(2)). Found in a complex with TMEM177, COA6, COX18, COX20, SCO1 and SCO2. Interacts with TMEM177 in a COX20-dependent manner. Interacts with COX20. Interacts with COX16. It depends on Cu cation as a cofactor.

It is found in the mitochondrion inner membrane. The catalysed reaction is 4 Fe(II)-[cytochrome c] + O2 + 8 H(+)(in) = 4 Fe(III)-[cytochrome c] + 2 H2O + 4 H(+)(out). Its function is as follows. Component of the cytochrome c oxidase, the last enzyme in the mitochondrial electron transport chain which drives oxidative phosphorylation. The respiratory chain contains 3 multisubunit complexes succinate dehydrogenase (complex II, CII), ubiquinol-cytochrome c oxidoreductase (cytochrome b-c1 complex, complex III, CIII) and cytochrome c oxidase (complex IV, CIV), that cooperate to transfer electrons derived from NADH and succinate to molecular oxygen, creating an electrochemical gradient over the inner membrane that drives transmembrane transport and the ATP synthase. Cytochrome c oxidase is the component of the respiratory chain that catalyzes the reduction of oxygen to water. Electrons originating from reduced cytochrome c in the intermembrane space (IMS) are transferred via the dinuclear copper A center (CU(A)) of subunit 2 and heme A of subunit 1 to the active site in subunit 1, a binuclear center (BNC) formed by heme A3 and copper B (CU(B)). The BNC reduces molecular oxygen to 2 water molecules using 4 electrons from cytochrome c in the IMS and 4 protons from the mitochondrial matrix. In Oryctolagus cuniculus (Rabbit), this protein is Cytochrome c oxidase subunit 2 (MT-CO2).